Here is an 804-residue protein sequence, read N- to C-terminus: MAENSESLGTVPEHERILQEIESTDTACVGPTLRSVYDDQPNAHKKFMEKLDACIRNHDKEIEKMCNFHHQGFVDAITELLKVRTDAEKLKVQVTDTNRRFQDAGKEVIVHTEDIIRCRIQQRNITTVVEKLQLCLPVLEMYSKLKEQMSAKRYYSALKTMEQLENVYFPWVSQYRFCQLMIENLPKLREDIKEISMSDLKDFLESIRKHSDKIGETAMKQAQHQKTFSVSLQKQNKMKFGKNMYINRDRIPEERNETVLKHSLEEEDENEEEILTVQDLVDFSPVYRCLHIYSVLGDEETFENYYRKQRKKQARLVLQPQSNMHETVDGYRRYFTQIVGFFVVEDHILHVTQGLVTRAYTDELWNMALSKIIAVLRAHSSYCTDPDLVLELKNLTVIFADTLQGYGFPVNRLFDLLFEIRDQYNETLLKKWAGVFRDIFEEDNYSPIPVVNEEEYKIVISKFPFQDPDLEKQSFPKKFPMSQSVPHIYIQVKEFIYASLKFSESLHRSSTEIDDMLRKSTNLLLTRTLSSCLLNLIRKPHIGLTELVQIIINTTHLEQACKYLEDFITNITNISQETVHTTRLYGLSTFKDARHAAEGEIYTKLNQKIDEFVQLADYDWTMSEPDGRASGYLMDLINFLRSIFQVFTHLPGKVAQTACMSACQHLSTSLMQMLLDSELKQISMGAVQQFNLDVIQCELFASSEPVPGFQGDTLQLAFIDLRQLLDLFMVWDWSTYLADYGQPASKYLRVNPNTALTLLEKMKDTSKKNNIFAQFRKNDRDKQKLIETVVKQLRSLVNGMSQHM.

The protein belongs to the SEC15 family. In terms of assembly, the exocyst complex is composed of EXOC1, EXOC2, EXOC3, EXOC4, EXOC5, EXOC6, EXOC7 and EXOC8. Interacts with CNTRL. Interacts with RAB11A in a GTP-dependent manner.

The protein resides in the cytoplasm. It is found in the perinuclear region. It localises to the cell projection. The protein localises to the growth cone. Its subcellular location is the midbody. The protein resides in the midbody ring. In terms of biological role, component of the exocyst complex involved in the docking of exocytic vesicles with fusion sites on the plasma membrane. Together with RAB11A, RAB3IP, RAB8A, PARD3, PRKCI, ANXA2, CDC42 and DNMBP promotes transcytosis of PODXL to the apical membrane initiation sites (AMIS), apical surface formation and lumenogenesis. In Homo sapiens (Human), this protein is Exocyst complex component 6 (EXOC6).